The chain runs to 219 residues: 2-hydroxy-3-keto-5-methylthiopentenyl-1-phosphate phosphatase (219 aa).

This sequence belongs to the HAD-like hydrolase superfamily. MtnX family.

The enzyme catalyses 2-hydroxy-5-methylsulfanyl-3-oxopent-1-enyl phosphate + H2O = 1,2-dihydroxy-5-(methylsulfanyl)pent-1-en-3-one + phosphate. It participates in amino-acid biosynthesis; L-methionine biosynthesis via salvage pathway; L-methionine from S-methyl-5-thio-alpha-D-ribose 1-phosphate: step 4/6. Dephosphorylates 2-hydroxy-3-keto-5-methylthiopentenyl-1-phosphate (HK-MTPenyl-1-P) yielding 1,2-dihydroxy-3-keto-5-methylthiopentene (DHK-MTPene). In Bacillus thuringiensis subsp. konkukian (strain 97-27), this protein is 2-hydroxy-3-keto-5-methylthiopentenyl-1-phosphate phosphatase.